A 545-amino-acid chain; its full sequence is Tripartite motif-containing protein 55 (545 aa).

An RING-type zinc finger spans residues 26-82 (CPICLEMFTKPVVILPCQHNLCRKCASDIFQASNPYLPTRGGTTVASGGRFRCPSCR). The B box-type zinc finger occupies 119–161 (LDQPMCEEHEEERINIYCLNCEVPTCSLCKVFGAHKDCQVAPL). Positions 124, 127, 147, and 153 each coordinate Zn(2+). The stretch at 219-258 (YSILEERKTEMTQAITRTQEEKLEHVRTLIRKYSDHLENV) forms a coiled coil. Residues 269–327 (MDEPEMAVFLQNAKTLLQKITEASKAFQMEKIEQGYEIMNNFTVNLNREEKIIREIDFS) enclose the COS domain. Disordered regions lie at residues 324-378 (IDFS…SELA) and 406-528 (LVTQ…GADS). Positions 328-355 (REEEDEDDEGEVDEEGEGEDAVEVEEAE) are enriched in acidic residues. 2 stretches are compositionally biased toward low complexity: residues 417–426 (SQQTTQSETS) and 469–493 (SAAE…AAVS). Positions 495-506 (KESSSTAATSQI) are enriched in polar residues. Low complexity predominate over residues 510–520 (ASSPQGQAAAL).

In terms of assembly, homooligomer and heterooligomer. Interacts with titin/TTN. Interacts with myosins. Interacts with SQSTM1 and NBR1. Probably interacts with TRIM63 and TRIM54. Post-translationally, targeted for degradation through the proteasomal and lysosomal pathways in the presence of SUMO3.

It localises to the nucleus. Its subcellular location is the cytoplasm. The catalysed reaction is S-ubiquitinyl-[E2 ubiquitin-conjugating enzyme]-L-cysteine + [acceptor protein]-L-lysine = [E2 ubiquitin-conjugating enzyme]-L-cysteine + N(6)-ubiquitinyl-[acceptor protein]-L-lysine.. Its function is as follows. E3 ubiquitin ligase that plays an important role in regulating cardiac development and contractility, muscle growth, metabolism, and fiber-type differentiation. Acts as a critical factor that regulates cardiomyocyte size during development in concert with TRIM63 by regulating E2F1-mediated gene expression. Plays a role in apoptosis induction in cardiomyocytes by promoting ubiquitination of the DUSP1 phosphatase. Promotes non-canonical NF-kappa-B signaling and B-cell-mediated immune responses by mediating NFKB2 'Lys-48'-linked ubiquitination and processing. In turn, NFKB2 is further processed by valosin-containing protein/VCP, an ATPase that mediates ubiquitin-dependent protein degradation by the proteasome. May play a role in preventing macrophages from producing inflammatory factors and migrating by downregulating the level of nuclear NF-kappa-B subunit RELA. Also modifies PPARG via polyubiquitination and accelerates PPARG proteasomal degradation to inhibit its activity. This is Tripartite motif-containing protein 55 (Trim55) from Rattus norvegicus (Rat).